A 309-amino-acid polypeptide reads, in one-letter code: Uracil phosphoribosyltransferase homolog (309 aa).

Residues 1 to 41 are disordered; it reads MATELQCPDSMPCHNQQVNSASTPSPEQLRPGDPILDHAGG. The segment covering 13–26 has biased composition (polar residues); the sequence is CHNQQVNSASTPSP. The residue at position 25 (S25) is a Phosphoserine. Residues R133, R142, and 176–179 each bind GTP; that span reads EKGN. Position 186 (R186) interacts with 5-phospho-alpha-D-ribose 1-diphosphate. Positions 203 and 232 each coordinate GTP. A 5-phospho-alpha-D-ribose 1-diphosphate-binding site is contributed by 238–246; the sequence is YPILSTGNT. Residue 299–301 coordinates uracil; the sequence is THF.

Belongs to the UPRTase family.

The protein resides in the cytoplasm. It localises to the nucleus. This is Uracil phosphoribosyltransferase homolog (UPRT) from Macaca fascicularis (Crab-eating macaque).